The sequence spans 348 residues: 11-beta-hydroxysteroid dehydrogenase A (348 aa).

The chain crosses the membrane as a helical; Signal-anchor for type II membrane protein span at residues 10–30 (LIAPPFTFFFLLFFLPPFQIF). The Proline-knob signature appears at 13–26 (PPFTFFFLLFFLPP). Residues 54–80 (GASSGIGESLAYEYAKRGACLVLAARR), Asp-105, and 132–135 (NAGI) each bind NADP(+). Residue Ser-184 participates in substrate binding. Tyr-197 serves as the catalytic Proton acceptor. NADP(+) contacts are provided by residues 197 to 201 (YNASK) and Lys-201.

The protein belongs to the short-chain dehydrogenases/reductases (SDR) family. As to expression, expressed in seeds (at protein level). Not expressed in stem, leaf or root (at protein level).

It is found in the lipid droplet. It localises to the membrane. It carries out the reaction an 11beta-hydroxysteroid + NADP(+) = an 11-oxosteroid + NADPH + H(+). The catalysed reaction is an 11beta-hydroxysteroid + NAD(+) = an 11-oxosteroid + NADH + H(+). It catalyses the reaction corticosterone + NADP(+) = 11-dehydrocorticosterone + NADPH + H(+). The enzyme catalyses corticosterone + NAD(+) = 11-dehydrocorticosterone + NADH + H(+). It carries out the reaction 17beta-estradiol + NADP(+) = estrone + NADPH + H(+). The catalysed reaction is 17beta-estradiol + NAD(+) = estrone + NADH + H(+). Functionally, has dehydrogenase activity against corticosterone (11 beta-hydroxysteroid) and estradiol (17 beta-hydroxysteroid), with higher activity against estradiol. Possesses higher dehydrogenase activity with NADP(+) than NAD(+) regardless of the sterol substrate. May be involved in signal transduction regulated by various sterols. This is 11-beta-hydroxysteroid dehydrogenase A from Sesamum indicum (Oriental sesame).